A 356-amino-acid polypeptide reads, in one-letter code: Serine/arginine-rich splicing factor RS41 (356 aa).

2 RRM domains span residues 2-74 (KPVF…WTKN) and 96-167 (KTLF…YAVK). The disordered stretch occupies residues 73 to 92 (KNDRGGAGRSGGSRRSSSGL). Basic and acidic residues predominate over residues 168–186 (DDDSRGNGYSPERRRDRSP). Residues 168 to 356 (DDDSRGNGYS…SPSRSPPAEE (189 aa)) form a disordered region. Serine 192, serine 194, serine 210, serine 239, serine 254, and serine 274 each carry phosphoserine. The span at 238–253 (LSPDYKRDDRRRERVA) shows a compositional bias: basic and acidic residues. Tandem repeats lie at residues 267–278 (KGRGESRSPPPY), 279–290 (EKRRESRSPPPY), and 291–302 (EKRRESRSPPPY). The 4 X 12 AA tandem repeats of [KE]-[GK]-R -[GR]-E-S-R-S-P-P-P-Y stretch occupies residues 267 to 307 (KGRGESRSPPPYEKRRESRSPPPYEKRRESRSPPPYEKRRE). Residues 268–306 (GRGESRSPPPYEKRRESRSPPPYEKRRESRSPPPYEKRR) show a composition bias toward basic and acidic residues. The 4; truncated repeat unit spans residues 303–307 (EKRRE). A phosphoserine mark is found at serine 309, serine 324, serine 342, serine 347, and serine 351.

Belongs to the splicing factor SR family. RS subfamily. Component of the spliceosome. Interacts with RCF3 and CPL1. Interacts with DRB1/HYL1 and SE. As to expression, leaves, stem, roots and flowers.

Its subcellular location is the nucleus. It localises to the nucleus speckle. Required for constitutive and alternative pre-mRNA splicing. Involved in primary miRNA processing and pri-miRNA biogenesis. Binds both intronless and intron-containing pri-miRNAs. This chain is Serine/arginine-rich splicing factor RS41 (RS41), found in Arabidopsis thaliana (Mouse-ear cress).